A 216-amino-acid polypeptide reads, in one-letter code: Probable nicotinate-nucleotide adenylyltransferase (216 aa).

Belongs to the NadD family.

It catalyses the reaction nicotinate beta-D-ribonucleotide + ATP + H(+) = deamido-NAD(+) + diphosphate. The protein operates within cofactor biosynthesis; NAD(+) biosynthesis; deamido-NAD(+) from nicotinate D-ribonucleotide: step 1/1. Functionally, catalyzes the reversible adenylation of nicotinate mononucleotide (NaMN) to nicotinic acid adenine dinucleotide (NaAD). The chain is Probable nicotinate-nucleotide adenylyltransferase from Geobacter sp. (strain M21).